Here is a 120-residue protein sequence, read N- to C-terminus: Testis-expressed protein 48 (120 aa).

A compositionally biased stretch (polar residues) spans 29–45 (KVPSQTQEHKPSTQNLL). The disordered stretch occupies residues 29–86 (KVPSQTQEHKPSTQNLLLQKDELDRQNPKRINAVSHLPSRTPLIQTKKSTSSSSSEFE). Residues 74–83 (TKKSTSSSSS) show a composition bias toward low complexity.

The polypeptide is Testis-expressed protein 48 (Homo sapiens (Human)).